We begin with the raw amino-acid sequence, 179 residues long: Methylated-DNA--protein-cysteine methyltransferase (179 aa).

The active-site Nucleophile; methyl group acceptor is the Cys-130.

The protein belongs to the MGMT family.

Its subcellular location is the cytoplasm. The enzyme catalyses a 6-O-methyl-2'-deoxyguanosine in DNA + L-cysteinyl-[protein] = S-methyl-L-cysteinyl-[protein] + a 2'-deoxyguanosine in DNA. The catalysed reaction is a 4-O-methyl-thymidine in DNA + L-cysteinyl-[protein] = a thymidine in DNA + S-methyl-L-cysteinyl-[protein]. Involved in the cellular defense against the biological effects of O6-methylguanine (O6-MeG) and O4-methylthymine (O4-MeT) in DNA. Repairs the methylated nucleobase in DNA by stoichiometrically transferring the methyl group to a cysteine residue in the enzyme. This is a suicide reaction: the enzyme is irreversibly inactivated. This chain is Methylated-DNA--protein-cysteine methyltransferase, found in Haemophilus influenzae (strain ATCC 51907 / DSM 11121 / KW20 / Rd).